The following is a 329-amino-acid chain: Myoblast determination protein 1 homolog (329 aa).

Positions 160 to 211 constitute a bHLH domain; that stretch reads DRRKAATMRERRRLRKVNEAFEVVKQRTCPNPNQRLPKVEILRSAIDYINTL. Residues 256–279 form a disordered region; it reads NPDGPNVYDDEDLSDTDEDRDHHH. A compositionally biased stretch (acidic residues) spans 263 to 273; sequence YDDEDLSDTDE.

As to quaternary structure, efficient DNA binding requires dimerization with another bHLH protein. In terms of tissue distribution, body wall muscle cells; in clonal muscle precursors, in a set of early embryonic blastomeres (the ms-granddaughters), and in six glial-like cells called GLRS.

Its subcellular location is the nucleus. Accumulation defines the body wall muscle cell fate during embryogenesis. In Caenorhabditis briggsae, this protein is Myoblast determination protein 1 homolog (hlh-1).